Here is a 358-residue protein sequence, read N- to C-terminus: MATYPEEAELETEFPGTTFYDYEFAQPCFKVSITDLGAQFLPSLFSLVFIVGLLGNITVIVVLTKYQKLKIMTNIYLLNLAISDLLFLFTLPFWTYYVHWNKWVFGHFMCKIISGLYYVGLFSEIFFIILLTIDRYLAIVHAVFALRTRTVTFGIITSVITWVLAVLAALPEFMFYGTQGHFEVLFCGPSYPEKKEHHWKRFQALRMNIFGLALPLLIMIICYTGIIKTLLRCPSKKKYKAIRLIFVIMVVFFVFWTPYNLLLLFSAFDLSFLDDCERSKQLDMAKHVTEVIAHTHCCINPIIYAFVGERFQKYLRHFLHRNVTMHLSKYIPFFTSEKLERSSSISPSSGDPELSVVF.

At 1–43 (MATYPEEAELETEFPGTTFYDYEFAQPCFKVSITDLGAQFLPS) the chain is on the extracellular side. A helical transmembrane segment spans residues 44–64 (LFSLVFIVGLLGNITVIVVLT). Residues 65–74 (KYQKLKIMTN) lie on the Cytoplasmic side of the membrane. A helical membrane pass occupies residues 75–95 (IYLLNLAISDLLFLFTLPFWT). Residues 96-112 (YYVHWNKWVFGHFMCKI) are Extracellular-facing. Residues 113-133 (ISGLYYVGLFSEIFFIILLTI) traverse the membrane as a helical segment. At 134 to 154 (DRYLAIVHAVFALRTRTVTFG) the chain is on the cytoplasmic side. The chain crosses the membrane as a helical span at residues 155–175 (IITSVITWVLAVLAALPEFMF). Residues 176 to 206 (YGTQGHFEVLFCGPSYPEKKEHHWKRFQALR) are Extracellular-facing. A helical transmembrane segment spans residues 207 to 227 (MNIFGLALPLLIMIICYTGII). Over 228–243 (KTLLRCPSKKKYKAIR) the chain is Cytoplasmic. The chain crosses the membrane as a helical span at residues 244-264 (LIFVIMVVFFVFWTPYNLLLL). The Extracellular segment spans residues 265–287 (FSAFDLSFLDDCERSKQLDMAKH). A helical membrane pass occupies residues 288–308 (VTEVIAHTHCCINPIIYAFVG). Topologically, residues 309 to 358 (ERFQKYLRHFLHRNVTMHLSKYIPFFTSEKLERSSSISPSSGDPELSVVF) are cytoplasmic.

This sequence belongs to the G-protein coupled receptor 1 family.

It is found in the cell membrane. Functionally, receptor for C-C type chemokine. Binds and responds to a variety of chemokines, including CCL11, CCL26, CCL7, CCL13, RANTES(CCL5) and CCL15. Subsequently transduces a signal by increasing the intracellular calcium ions level. In addition acts as a possible functional receptor for NARS1. This chain is C-C chemokine receptor type 3 (CCR3), found in Cavia porcellus (Guinea pig).